Consider the following 267-residue polypeptide: Large ribosomal subunit protein uL4 (267 aa).

It belongs to the universal ribosomal protein uL4 family. Part of the 50S ribosomal subunit.

Functionally, one of the primary rRNA binding proteins, this protein initially binds near the 5'-end of the 23S rRNA. It is important during the early stages of 50S assembly. It makes multiple contacts with different domains of the 23S rRNA in the assembled 50S subunit and ribosome. Forms part of the polypeptide exit tunnel. The protein is Large ribosomal subunit protein uL4 of Saccharolobus islandicus (strain L.S.2.15 / Lassen #1) (Sulfolobus islandicus).